Reading from the N-terminus, the 77-residue chain is Apelin (77 aa).

Positions 1 to 22 are cleaved as a signal peptide; the sequence is MNLRLCVQALLLLWLSLTAVCG. The propeptide occupies 23 to 41; the sequence is VPLMLPPDGTGLEEGSMRY. The segment at 46–77 is disordered; the sequence is RTSRTGPGAWQGGRRKFRRQRPRLSHKGPMPF. The segment covering 58–71 has biased composition (basic residues); it reads GRRKFRRQRPRLSH.

It belongs to the apelin family. Post-translationally, several active peptides may be produced by proteolytic processing of the peptide precursor. As to expression, expressed in extraembryonic visceral endoderm and in the primitive streak at 6.5 and 7.5 dpc. Expressed in the anterior visceral yolk sac at 8.25 dpc. Expressed weakly in the embryonic heart at 11.5 dpc. Expressed in the adult heart. Expressed in endothelial cells and cardiomyocytes and weakly expressed in fibroblasts.

Its subcellular location is the secreted. It localises to the extracellular space. In terms of biological role, peptide hormone that functions as endogenous ligand for the G-protein-coupled apelin receptor (APLNR/APJ). Functions as a balanced agonist activating both G(i) protein pathway and beta-arrestin pathway of APLNR. Downstream G proteins activation, apelin can inhibit cAMP production and activate key intracellular effectors such as ERKs. On the other hand, APLNR activation induces beta-arrestin recruitment to the membrane leading to desensitization and internalization of the receptor. Apelin also blunts mechanical stretch-induced hypertrophic induction from APLNR. Apelin-36 dissociates more hardly than (pyroglu)apelin-13 from APLNR. Involved in the regulation of cardiac precursor cell movements during gastrulation and heart morphogenesis. Has an inhibitory effect on cytokine production in response to T-cell receptor/CD3 cross-linking; the oral intake of apelin in the colostrum and the milk might therefore modulate immune responses in neonates. Plays a role in early coronary blood vessels formation. Mediates myocardial contractility in an ERK1/2-dependent manner. May also have a role in the central control of body fluid homeostasis by influencing vasopressin release and drinking behavior. This is Apelin from Mus musculus (Mouse).